A 162-amino-acid polypeptide reads, in one-letter code: Cyclic pyranopterin monophosphate synthase (162 aa).

Residues 75–77 (LCH) and 113–114 (ME) each bind substrate. D128 is a catalytic residue.

The protein belongs to the MoaC family. In terms of assembly, homohexamer; trimer of dimers.

It carries out the reaction (8S)-3',8-cyclo-7,8-dihydroguanosine 5'-triphosphate = cyclic pyranopterin phosphate + diphosphate. Its pathway is cofactor biosynthesis; molybdopterin biosynthesis. Its function is as follows. Catalyzes the conversion of (8S)-3',8-cyclo-7,8-dihydroguanosine 5'-triphosphate to cyclic pyranopterin monophosphate (cPMP). The protein is Cyclic pyranopterin monophosphate synthase of Burkholderia ambifaria (strain ATCC BAA-244 / DSM 16087 / CCUG 44356 / LMG 19182 / AMMD) (Burkholderia cepacia (strain AMMD)).